A 231-amino-acid polypeptide reads, in one-letter code: MDQDEALTTVDNIVTQFNTYEDFLDSQITTLDLYYLEDEGLARQLVELGYRGTGEVVKREDFEARKAAIEIARLAERTQKKTLTSAGKDLHDNFLKALAVREEDNRSGKSVIFIRDKNSHGQEVSGYIDYAHRLKTEDFEVYFSGKKRLLPRPTDMSFYNWDSHIAIWNSTPNYQVIADNPEGLLFKYKRDRKILNVDPKAQPGDNSTRSPILTELYTQVVIFDHVSRRKT.

The protein localises to the cytoplasm. Its subcellular location is the nucleus. In terms of biological role, may be involved in spermatogenesis. The protein is Cilia- and flagella-associated protein 299 of Bos taurus (Bovine).